A 263-amino-acid chain; its full sequence is Trans-aconitate 2-methyltransferase (263 aa).

The protein belongs to the methyltransferase superfamily. Tam family.

The protein localises to the cytoplasm. It carries out the reaction trans-aconitate + S-adenosyl-L-methionine = (E)-3-(methoxycarbonyl)pent-2-enedioate + S-adenosyl-L-homocysteine. Functionally, catalyzes the S-adenosylmethionine monomethyl esterification of trans-aconitate. This is Trans-aconitate 2-methyltransferase from Mycobacterium marinum (strain ATCC BAA-535 / M).